A 277-amino-acid chain; its full sequence is Phosphoenolpyruvate synthase regulatory protein (277 aa).

157 to 164 (GVSRCGKT) lines the ADP pocket.

Belongs to the pyruvate, phosphate/water dikinase regulatory protein family. PSRP subfamily.

It carries out the reaction [pyruvate, water dikinase] + ADP = [pyruvate, water dikinase]-phosphate + AMP + H(+). The catalysed reaction is [pyruvate, water dikinase]-phosphate + phosphate + H(+) = [pyruvate, water dikinase] + diphosphate. Bifunctional serine/threonine kinase and phosphorylase involved in the regulation of the phosphoenolpyruvate synthase (PEPS) by catalyzing its phosphorylation/dephosphorylation. This Shigella boydii serotype 4 (strain Sb227) protein is Phosphoenolpyruvate synthase regulatory protein.